The following is a 702-amino-acid chain: Elongation factor G (702 aa).

Residues 8–286 enclose the tr-type G domain; that stretch reads DKVRNIGIIA…AVVEYLPSPL (279 aa). GTP contacts are provided by residues 17-24, 85-89, and 139-142; these read AHIDAGKT, DTPGH, and NKMD.

The protein belongs to the TRAFAC class translation factor GTPase superfamily. Classic translation factor GTPase family. EF-G/EF-2 subfamily.

It localises to the cytoplasm. Its function is as follows. Catalyzes the GTP-dependent ribosomal translocation step during translation elongation. During this step, the ribosome changes from the pre-translocational (PRE) to the post-translocational (POST) state as the newly formed A-site-bound peptidyl-tRNA and P-site-bound deacylated tRNA move to the P and E sites, respectively. Catalyzes the coordinated movement of the two tRNA molecules, the mRNA and conformational changes in the ribosome. In Chloroflexus aurantiacus (strain ATCC 29366 / DSM 635 / J-10-fl), this protein is Elongation factor G.